Here is a 390-residue protein sequence, read N- to C-terminus: Sorting nexin C1711.11 (390 aa).

Residues 1-123 (MLKCTIKNEQ…QFLENNSWKS (123 aa)) enclose the PX domain. Arginine 44, lysine 70, and arginine 89 together coordinate a 1,2-diacyl-sn-glycero-3-phospho-(1D-myo-inositol-3-phosphate).

It belongs to the sorting nexin family.

It localises to the cytoplasm. It is found in the membrane. The protein is Sorting nexin C1711.11 of Schizosaccharomyces pombe (strain 972 / ATCC 24843) (Fission yeast).